The primary structure comprises 85 residues: DNA-directed RNA polymerase subunit omega (85 aa).

Belongs to the RNA polymerase subunit omega family. The RNAP catalytic core consists of 2 alpha, 1 beta, 1 beta' and 1 omega subunit. When a sigma factor is associated with the core the holoenzyme is formed, which can initiate transcription.

It carries out the reaction RNA(n) + a ribonucleoside 5'-triphosphate = RNA(n+1) + diphosphate. In terms of biological role, promotes RNA polymerase assembly. Latches the N- and C-terminal regions of the beta' subunit thereby facilitating its interaction with the beta and alpha subunits. The protein is DNA-directed RNA polymerase subunit omega of Latilactobacillus sakei subsp. sakei (strain 23K) (Lactobacillus sakei subsp. sakei).